The sequence spans 75 residues: Caerin-1.1 (75 aa).

Positions 1–22 (MASLKKSLFLVLLLGFVSVSIC) are cleaved as a signal peptide. Residues 23-49 (EEEKRQEDEDEHEEEGESQEEGSEEKR) constitute a propeptide that is removed on maturation. The tract at residues 24 to 49 (EEKRQEDEDEHEEEGESQEEGSEEKR) is disordered. Positions 30 to 45 (DEDEHEEEGESQEEGS) are enriched in acidic residues. At Leu-74 the chain carries Leucine amide.

This sequence belongs to the frog skin active peptide (FSAP) family. Caerin subfamily. In terms of processing, the major product is Caerin-1.1; in addition, different peptides are produced that are missing some amino acid residues at the N-terminus or C-terminus. Caerin-1.1.1 and Caerin-1.1.4 are inactive. Expressed by the skin parotoid and/or rostral glands.

Its subcellular location is the secreted. In terms of biological role, antimicrobial peptide with antibacterial and antiviral activities. Adopts an alpha helical conformation which can disrupt bacterial membranes. Inhibits the formation of NO by neuronal nitric oxide synthase (nNOS) at micromolar concentrations. Acts by a non-competitive mechanism, probably by binding to calcium/calmodulin and as a consequence blocking calmodulin attachment to nNOS. Functionally, is inactive. In Ranoidea caerulea (Green tree frog), this protein is Caerin-1.1.